Here is a 615-residue protein sequence, read N- to C-terminus: MLNRYPLWKYIMLVVVIIVGLLYALPNLYGEDPAVQITGVRGVAASEQTLIQVQKTLQEEKIPAKSVALEEGAILARFDTTDTQLRAREALMSVLGDKYVVALNLAPATPRWLAAIHADPMKLGLDLRGGVHFLMEVDMDTALGKLQEQNIDSLRSDLREKGIPYTTVRKENNYGLSITFRDSKARDEAIAYLTPRHRDLVISSQSGNQLRAVMTDARLSEAREYAVQQNINILRNRVNQLGVAEPVVQRQGADRIVVELPGIQDTARAKEILGATATLEFRLVNTNVDQAAAAAGRVPGDSEVKQTREGQPVVLYKRVILTGDHITDSTSSQDEYNQPQVNISLDSAGGNIMSNFTKDNIGKPMATLFVEYKDSGKKDANGRAVLVKQEEVINIANIQSRLGNSFRITGISNPNEARQLSLLLRAGALIAPIQIVEERTIGPTLGMQNIKQGLEACLAGLVVSILFMIFFYKKFGLIATSALVANLVLIVGIMSLLPGATLSMPGIAGIVLTLAVAVDANVLINERIKEELSNGRTVQQAINEGYAGAFSSIFDANITTLIKVIILYAVGTGAIKGFAITTGIGVATSMFTAIIGTRAIVNLLYGGKRVTKLSI.

Transmembrane regions (helical) follow at residues 10–30 (YIML…NLYG), 452–472 (QGLE…IFFY), 477–497 (LIAT…MSLL), 504–524 (MPGI…NVLI), 546–568 (YAGA…IILY), and 585–605 (GVAT…NLLY).

The protein belongs to the SecD/SecF family. SecD subfamily. Forms a complex with SecF. Part of the essential Sec protein translocation apparatus which comprises SecA, SecYEG and auxiliary proteins SecDF-YajC and YidC.

Its subcellular location is the cell inner membrane. Functionally, part of the Sec protein translocase complex. Interacts with the SecYEG preprotein conducting channel. SecDF uses the proton motive force (PMF) to complete protein translocation after the ATP-dependent function of SecA. In Salmonella choleraesuis (strain SC-B67), this protein is Protein translocase subunit SecD.